Reading from the N-terminus, the 297-residue chain is Phenylalanine-4-hydroxylase (297 aa).

Positions 138, 143, and 184 each coordinate Fe cation.

The protein belongs to the biopterin-dependent aromatic amino acid hydroxylase family. Monomer. Fe(2+) serves as cofactor.

It catalyses the reaction (6R)-L-erythro-5,6,7,8-tetrahydrobiopterin + L-phenylalanine + O2 = (4aS,6R)-4a-hydroxy-L-erythro-5,6,7,8-tetrahydrobiopterin + L-tyrosine. It participates in amino-acid degradation; L-phenylalanine degradation; acetoacetate and fumarate from L-phenylalanine: step 1/6. This Chromobacterium violaceum (strain ATCC 12472 / DSM 30191 / JCM 1249 / CCUG 213 / NBRC 12614 / NCIMB 9131 / NCTC 9757 / MK) protein is Phenylalanine-4-hydroxylase (phhA).